Here is a 188-residue protein sequence, read N- to C-terminus: Actin-related protein 2/3 complex subunit 3 (188 aa).

It belongs to the ARPC3 family. In terms of assembly, component of the Arp2/3 complex.

It is found in the cytoplasm. Its subcellular location is the cytoskeleton. In terms of biological role, functions as a component of the Arp2/3 complex which is involved in regulation of actin polymerization and together with an activating nucleation-promoting factor (NPF) mediates the formation of branched actin networks. In Entamoeba histolytica (strain ATCC 30459 / HM-1:IMSS / ABRM), this protein is Actin-related protein 2/3 complex subunit 3.